Consider the following 65-residue polypeptide: Small ribosomal subunit protein bS21 (65 aa).

A disordered region spans residues G45–S65. Basic residues predominate over residues K48–Q57.

The protein belongs to the bacterial ribosomal protein bS21 family.

This is Small ribosomal subunit protein bS21 from Chlorobium phaeobacteroides (strain DSM 266 / SMG 266 / 2430).